A 281-amino-acid polypeptide reads, in one-letter code: MGRYAVLVSGPAGSGKSTFCSALIAHAQSLGRNVHLFNLDPAAERFEYQPSIDIKELISLEDVMEEMNLGPNGGLIYCFEYLLDNLDWLDDELGQFNDDYIIIDCPGQIELYTHFPIMSRLVNILSSQYHFRICATYLLESQFIDDKTKYFAGVLSAMSAMINLEVPHINLLSKMDLVEKGEIGSEAKRGRKREMERYLDPDPLLLMDEVNSRTNPKFHSLNQALVQLIDDFSMVSFMPLDSTDEDSVGTILSHIDNAVQYGEDEEPKEPKDMDEGDFTAQ.

GTP is bound at residue 13–18; sequence GSGKST. The Gly-Pro-Asn (GPN)-loop; involved in dimer interface signature appears at 70–72; sequence GPN. 173 to 176 provides a ligand contact to GTP; sequence SKMD. Positions 259 to 281 are disordered; that stretch reads VQYGEDEEPKEPKDMDEGDFTAQ.

Belongs to the GPN-loop GTPase family. As to quaternary structure, heterodimers with GPN1 or GPN2. Binds to RNA polymerase II (RNAPII).

In terms of biological role, small GTPase required for proper nuclear import of RNA polymerase II and III (RNAPII and RNAPIII). May act at an RNAP assembly step prior to nuclear import. The chain is GPN-loop GTPase 3 from Mycosarcoma maydis (Corn smut fungus).